The chain runs to 831 residues: Translation initiation factor IF-2 (831 aa).

The tr-type G domain occupies 329–499 (TRAPVVTVMG…LLIAEMQDLK (171 aa)). Residues 338–345 (GHVDHGKT) form a G1 region. Position 338-345 (338-345 (GHVDHGKT)) interacts with GTP. Positions 363 to 367 (GITQH) are G2. The segment at 385 to 388 (DTPG) is G3. Residues 385–389 (DTPGH) and 439–442 (NKID) contribute to the GTP site. A G4 region spans residues 439–442 (NKID). The interval 475–477 (SAL) is G5.

It belongs to the TRAFAC class translation factor GTPase superfamily. Classic translation factor GTPase family. IF-2 subfamily.

The protein resides in the cytoplasm. In terms of biological role, one of the essential components for the initiation of protein synthesis. Protects formylmethionyl-tRNA from spontaneous hydrolysis and promotes its binding to the 30S ribosomal subunits. Also involved in the hydrolysis of GTP during the formation of the 70S ribosomal complex. This Rickettsia massiliae (strain Mtu5) protein is Translation initiation factor IF-2.